The following is a 398-amino-acid chain: DNA replication and repair protein RecF (398 aa).

Position 30 to 37 (30 to 37) interacts with ATP; the sequence is GRNGFGKT.

This sequence belongs to the RecF family.

It localises to the cytoplasm. Its function is as follows. The RecF protein is involved in DNA metabolism; it is required for DNA replication and normal SOS inducibility. RecF binds preferentially to single-stranded, linear DNA. It also seems to bind ATP. In Corynebacterium efficiens (strain DSM 44549 / YS-314 / AJ 12310 / JCM 11189 / NBRC 100395), this protein is DNA replication and repair protein RecF.